The sequence spans 37 residues: Cytochrome b6-f complex subunit 5 (37 aa).

The helical transmembrane segment at 5–25 threads the bilayer; that stretch reads FLFGIVLGLIPITLAGLFVTA.

It belongs to the PetG family. In terms of assembly, the 4 large subunits of the cytochrome b6-f complex are cytochrome b6, subunit IV (17 kDa polypeptide, PetD), cytochrome f and the Rieske protein, while the 4 small subunits are PetG, PetL, PetM and PetN. The complex functions as a dimer.

It localises to the plastid. Its subcellular location is the chloroplast thylakoid membrane. Component of the cytochrome b6-f complex, which mediates electron transfer between photosystem II (PSII) and photosystem I (PSI), cyclic electron flow around PSI, and state transitions. PetG is required for either the stability or assembly of the cytochrome b6-f complex. The sequence is that of Cytochrome b6-f complex subunit 5 from Solanum lycopersicum (Tomato).